A 321-amino-acid polypeptide reads, in one-letter code: Iron(3+)-hydroxamate-binding protein YxeB (321 aa).

A signal peptide spans 1–20; that stretch reads MKKNILLVGMLVLLLMFVSA. Cys-21 is lipidated: N-palmitoyl cysteine. A lipid anchor (S-diacylglycerol cysteine) is attached at Cys-21. Residues 24-33 show a composition bias toward low complexity; sequence TASKGSSSDS. The interval 24–48 is disordered; sequence TASKGSSSDSASEKTEMRTYKSPKG. The region spanning 58–316 is the Fe/B12 periplasmic-binding domain; that stretch reads RIVTDFYAGE…IITDMLIKRA (259 aa).

It belongs to the bacterial solute-binding protein 8 family. In terms of assembly, the complex is composed of an ATP-binding protein (FhuC), two transmembrane proteins (FhuB and FhuG) and a solute-binding protein (FhuD or YxeB).

It is found in the cell membrane. The protein localises to the membrane raft. Part of the ABC transporter complex FhuCBGD involved in iron(3+)-hydroxamate import. Binds the iron(3+)-hydroxamate complex and transfers it to the membrane-bound permease. Partially required for the transport of desferrioxamine. In Bacillus subtilis (strain 168), this protein is Iron(3+)-hydroxamate-binding protein YxeB (yxeB).